Consider the following 216-residue polypeptide: Imidazole glycerol phosphate synthase subunit HisH (216 aa).

Residues 2–216 (SVAIVDYGSG…LISNFLKWKP (215 aa)) form the Glutamine amidotransferase type-1 domain. The active-site Nucleophile is cysteine 88. Active-site residues include histidine 196 and glutamate 198.

Heterodimer of HisH and HisF.

It localises to the cytoplasm. It carries out the reaction 5-[(5-phospho-1-deoxy-D-ribulos-1-ylimino)methylamino]-1-(5-phospho-beta-D-ribosyl)imidazole-4-carboxamide + L-glutamine = D-erythro-1-(imidazol-4-yl)glycerol 3-phosphate + 5-amino-1-(5-phospho-beta-D-ribosyl)imidazole-4-carboxamide + L-glutamate + H(+). It catalyses the reaction L-glutamine + H2O = L-glutamate + NH4(+). It participates in amino-acid biosynthesis; L-histidine biosynthesis; L-histidine from 5-phospho-alpha-D-ribose 1-diphosphate: step 5/9. Functionally, IGPS catalyzes the conversion of PRFAR and glutamine to IGP, AICAR and glutamate. The HisH subunit catalyzes the hydrolysis of glutamine to glutamate and ammonia as part of the synthesis of IGP and AICAR. The resulting ammonia molecule is channeled to the active site of HisF. The chain is Imidazole glycerol phosphate synthase subunit HisH from Rhodopseudomonas palustris (strain ATCC BAA-98 / CGA009).